The chain runs to 273 residues: Shikimate dehydrogenase (NADP(+)) (273 aa).

Residues 15–17 (SLS) and Thr-62 contribute to the shikimate site. The active-site Proton acceptor is the Lys-66. Glu-78 provides a ligand contact to NADP(+). Positions 87 and 102 each coordinate shikimate. Residues 126-130 (GAGGA), 150-155 (NRTIEK), and Ile-217 each bind NADP(+). Position 219 (Tyr-219) interacts with shikimate. Gly-240 is a binding site for NADP(+).

This sequence belongs to the shikimate dehydrogenase family. In terms of assembly, homodimer.

The enzyme catalyses shikimate + NADP(+) = 3-dehydroshikimate + NADPH + H(+). The protein operates within metabolic intermediate biosynthesis; chorismate biosynthesis; chorismate from D-erythrose 4-phosphate and phosphoenolpyruvate: step 4/7. In terms of biological role, involved in the biosynthesis of the chorismate, which leads to the biosynthesis of aromatic amino acids. Catalyzes the reversible NADPH linked reduction of 3-dehydroshikimate (DHSA) to yield shikimate (SA). This Nitrosopumilus maritimus (strain SCM1) protein is Shikimate dehydrogenase (NADP(+)).